The following is a 255-amino-acid chain: NAD kinase (255 aa).

Aspartate 44 serves as the catalytic Proton acceptor. NAD(+) is bound by residues 44–45 (DG), histidine 49, 114–115 (NE), aspartate 144, alanine 152, 155–160 (SAYNLS), and glutamine 216.

Belongs to the NAD kinase family. A divalent metal cation serves as cofactor.

The protein resides in the cytoplasm. It catalyses the reaction NAD(+) + ATP = ADP + NADP(+) + H(+). Involved in the regulation of the intracellular balance of NAD and NADP, and is a key enzyme in the biosynthesis of NADP. Catalyzes specifically the phosphorylation on 2'-hydroxyl of the adenosine moiety of NAD to yield NADP. This Rickettsia canadensis (strain McKiel) protein is NAD kinase.